A 947-amino-acid chain; its full sequence is DNA mismatch repair protein MutS (947 aa).

620–627 contacts ATP; sequence GPNMSGKS.

This sequence belongs to the DNA mismatch repair MutS family.

Its function is as follows. This protein is involved in the repair of mismatches in DNA. It is possible that it carries out the mismatch recognition step. This protein has a weak ATPase activity. The polypeptide is DNA mismatch repair protein MutS (Clostridioides difficile (strain 630) (Peptoclostridium difficile)).